We begin with the raw amino-acid sequence, 392 residues long: 8-amino-7-oxononanoate synthase (392 aa).

R18 is a binding site for substrate. Position 105–106 (105–106 (GY)) interacts with pyridoxal 5'-phosphate. H130 is a substrate binding site. S177, H205, and T234 together coordinate pyridoxal 5'-phosphate. K237 carries the N6-(pyridoxal phosphate)lysine modification. T351 contributes to the substrate binding site.

This sequence belongs to the class-II pyridoxal-phosphate-dependent aminotransferase family. BioF subfamily. As to quaternary structure, homodimer. Pyridoxal 5'-phosphate is required as a cofactor.

It catalyses the reaction 6-carboxyhexanoyl-[ACP] + L-alanine + H(+) = (8S)-8-amino-7-oxononanoate + holo-[ACP] + CO2. It participates in cofactor biosynthesis; biotin biosynthesis. In terms of biological role, catalyzes the decarboxylative condensation of pimeloyl-[acyl-carrier protein] and L-alanine to produce 8-amino-7-oxononanoate (AON), [acyl-carrier protein], and carbon dioxide. This chain is 8-amino-7-oxononanoate synthase, found in Thioalkalivibrio sulfidiphilus (strain HL-EbGR7).